The following is a 619-amino-acid chain: Calnexin (619 aa).

The first 21 residues, 1–21 (MVNRKWMYIFIQFLLVSSIRS), serve as a signal peptide directing secretion. A Ca(2+)-binding site is contributed by Asp109. An intrachain disulfide couples Cys152 to Cys186. 4 residues coordinate an alpha-D-glucoside: Tyr156, Lys158, Tyr177, and Asp184. Asn203 is a glycosylation site (N-linked (GlcNAc...) asparagine). The tract at residues 268-401 (IFDETDLKPV…RLIDNPNYFE (134 aa)) is p domain (Extended arm). 5 consecutive repeat copies span residues 270–282 (DETD…WDER), 287–299 (DESA…WDEN), 306–318 (DEAA…WNEE), 325–337 (DPEA…WDED), and 340–350 (GSWEAPLIDNP). 2 4 X approximate repeats regions span residues 270-337 (DETD…WDED) and 340-397 (GSWE…IDNP). Cys352 and Cys358 form a disulfide bridge. Tandem repeats lie at residues 359 to 369 (GTWKAPTIKNP), 373 to 383 (GKWIRPKISNP), and 387 to 397 (GKWTARLIDNP). Glu417 is an an alpha-D-glucoside binding site. Asp428 lines the Ca(2+) pocket. Residues 481–501 (LWAVYILCVLLPLVAIGVFCF) traverse the membrane as a helical segment. The tract at residues 538-619 (GDEEDDVNQP…AKRRTARRGD (82 aa)) is disordered. A compositionally biased stretch (polar residues) spans 547 to 557 (PGPSGSQSNPE). Low complexity predominate over residues 566–577 (EQQSANSSQSSA). Asn571 is a glycosylation site (N-linked (GlcNAc...) asparagine). Residues 585 to 601 (HVVPENEPVKPTEEFAK) are compositionally biased toward basic and acidic residues. Positions 610 to 619 (AKRRTARRGD) are enriched in basic residues.

Belongs to the calreticulin family. In terms of processing, glycosylation is important for its biological activity. In terms of tissue distribution, expressed ubiquitously in every blastomere of the embryo up to the gastrulation stage. Expression becomes gradually restricted to the head and tail regions at the comma stage during embryogenesis. During postembryonic development, expressed prominently in the H-shaped excretory cell, in the neurons of head (including ASK and ADL) and tail (including PHA and PHB), in the dorsal and ventral nerve cords, and in the spermatheca. Expressed in the spicules of the male tail (at protein level).

It localises to the endoplasmic reticulum membrane. The protein localises to the cytoplasm. It is found in the perinuclear region. The protein resides in the cytoplasmic vesicle. Its function is as follows. Calcium-binding protein that interacts with newly synthesized monoglucosylated glycoproteins in the endoplasmic reticulum. It may act in assisting protein assembly and/or in the retention within the ER of unassembled protein subunits. It seems to play a major role in the quality control apparatus of the ER by the retention of incorrectly folded proteins. Required for embryogenesis and larval development under heat and ER stress conditions. May be important for germ cell development. Involved in neuronal necrotic cell death. This is Calnexin (cnx-1) from Caenorhabditis elegans.